The following is a 584-amino-acid chain: UBX domain-containing protein 2 (584 aa).

At 1-80 (MPVVNHEDSE…PTQTSTPMAE (80 aa)) the chain is on the cytoplasmic side. Residues 81–101 (TLVPPALGPRPLLFTASLPVV) traverse the membrane as a helical segment. The Lumenal portion of the chain corresponds to 102–151 (RPLPANFRNDFRTIGLNGRSNTVWSMFESFSYDGNPFLFILLLIPRIINR). Residues 152–172 (LSATIFTFFCTLLSLHSISGG) form a helical membrane-spanning segment. The Cytoplasmic segment spans residues 173 to 584 (GNSGKPKISK…DEEDEENEEQ (412 aa)). Residues 426–570 (ETTGKQATLQ…WPNGSLLVEA (145 aa)) enclose the UBX domain.

As to quaternary structure, component of the DOA10 ubiquitin ligase complex which contains E3 ligase SSM4/DOA10 and CDC48-binding protein UBX2/SEL1. Component of the HRD1 ubiquitin ligase complex which contains the E3 ligase HRD1, its cofactors HRD3, USA1 and DER1, substrate recruiting factor YOS9 and UBX2. In ERAD-L, HRD3 and YOS9 jointly bind misfolded glycoproteins in the endoplasmic reticulum (ER) lumen. Movement of ERAD-L substrates through the ER membrane is facilitated by HRD1 and DER1 which have lateral gates facing each other and which distort the membrane region between the lateral gates, making it much thinner than a normal phospholipid bilayer. Substrates insert into the membrane as a hairpin loop with one strand interacting with DER1 and the other with HRD1. Both the DOA10 and HRD1 ubiquitin ligase complexes interact with the heterotrimeric CDC48-NPL4-UFD1 ATPase complex which is recruited by UBX2 via its interaction with CDC48 and which moves ubiquitinated substrates to the cytosol for targeting to the proteasome.

It is found in the endoplasmic reticulum membrane. Functionally, integral endoplasmic reticulum membrane protein that coordinates the assembly of the ER-associated protein degradation (ERAD) machinery at the ER membrane. Mediates binding of CDC48 to the E3 ubiquitin ligases SSM4/DOA10 and HRD1, and to ERAD substrates. Component of the DOA10 ubiquitin ligase complex, which is part of the ERAD-C pathway responsible for the rapid degradation of membrane proteins with misfolded cytoplasmic domains. ERAD-C substrates are ubiquitinated through DOA10 in conjunction with the E2 ubiquitin-conjugating enzymes UBC6 and UBC7-CUE1. Also a component of the HRD1 ubiquitin ligase complex, which is part of the ERAD-L and ERAD-M pathways responsible for the rapid degradation of soluble lumenal and membrane proteins with misfolded lumenal domains (ERAD-L), or ER-membrane proteins with misfolded transmembrane domains (ERAD-M). ERAD-L substrates are ubiquitinated through HRD1 in conjunction with the E2 ubiquitin-conjugating enzymes UBC1 and UBC7-CUE1. Ubiquitinated substrates are then removed to the cytosol via the action of the CDC48-NPL4-UFD1 ATPase complex and targeted to the proteasome. This is UBX domain-containing protein 2 (UBX2) from Saccharomyces cerevisiae (strain ATCC 204508 / S288c) (Baker's yeast).